Here is a 387-residue protein sequence, read N- to C-terminus: uncharacterized protein (387 aa).

Residues 1-27 (MKKWMITIAMLILAGIALFVFISPLKS) form the signal peptide.

This is an uncharacterized protein from Bacillus subtilis (strain 168).